We begin with the raw amino-acid sequence, 307 residues long: MKNKLLARVARLGGLSSALLLAGCELDVLDPKGPVGEGVKTLIATSTVAMLIVVIPTILETLLFAWQYRQSNTSAEYLPKWCHSNKIEVTIWGVPSLIILFLAVITYQTCHSLDPYKPLEAEANTKPLHVEVVALDWKWLFIYPEQGIATVNQLAIPVNTPIDFNITSDSVMNSFFIPRLGSMIYAMAGMQTQLHLLASEPGDYLGESANYSGRGFSDMKFHTLAVSGDEFNAWVEKVKSSSEQLDSQTYPKLAAPSENPVEYFAHVEPGMFNTIVAKYNNGMVMDKSTGKMIQVQQSAMSDMNMKE.

Residues 1–23 form the signal peptide; sequence MKNKLLARVARLGGLSSALLLAG. Residue Cys24 is the site of N-palmitoyl cysteine attachment. Cys24 is lipidated: S-diacylglycerol cysteine. The next 2 membrane-spanning stretches (helical) occupy residues 46–66 and 87–107; these read STVA…LFAW and IEVT…VITY.

Belongs to the cytochrome c oxidase subunit 2 family. Heterotetramer of the subunits 1, 2, 3 and 4.

The protein localises to the cell membrane. This Acetobacter aceti protein is Ubiquinol oxidase subunit 2 (cyaB).